A 257-amino-acid polypeptide reads, in one-letter code: Probable enoyl-CoA hydratase (257 aa).

This sequence belongs to the enoyl-CoA hydratase/isomerase family.

It carries out the reaction a (3S)-3-hydroxyacyl-CoA = a (2E)-enoyl-CoA + H2O. It catalyses the reaction a 4-saturated-(3S)-3-hydroxyacyl-CoA = a (3E)-enoyl-CoA + H2O. Functionally, could possibly oxidize fatty acids using specific components. In Rhodobacter capsulatus (strain ATCC BAA-309 / NBRC 16581 / SB1003), this protein is Probable enoyl-CoA hydratase (fadB1).